We begin with the raw amino-acid sequence, 70 residues long: MLRLAPTVRLLQAPLRGWAVPKAHITAKPAKTPTSPKEQAIGLSVTFLSFLLPAGWVLYHLDNYKKSSAA.

The transit peptide at 1–24 (MLRLAPTVRLLQAPLRGWAVPKAH) directs the protein to the mitochondrion. Residues 25–35 (ITAKPAKTPTS) lie on the Mitochondrial matrix side of the membrane. A helical membrane pass occupies residues 36–59 (PKEQAIGLSVTFLSFLLPAGWVLY). The Mitochondrial intermembrane segment spans residues 60–70 (HLDNYKKSSAA).

Belongs to the cytochrome c oxidase VIII family. As to quaternary structure, component of the cytochrome c oxidase (complex IV, CIV), a multisubunit enzyme composed of 14 subunits. The complex is composed of a catalytic core of 3 subunits MT-CO1, MT-CO2 and MT-CO3, encoded in the mitochondrial DNA, and 11 supernumerary subunits COX4I1 (or COX4I2), COX5A, COX5B, COX6A2 (or COX6A1), COX6B1 (or COX6B2), COX6C, COX7A1 (or COX7A2), COX7B, COX7C, COX8B and NDUFA4, which are encoded in the nuclear genome. The complex exists as a monomer or a dimer and forms supercomplexes (SCs) in the inner mitochondrial membrane with NADH-ubiquinone oxidoreductase (complex I, CI) and ubiquinol-cytochrome c oxidoreductase (cytochrome b-c1 complex, complex III, CIII), resulting in different assemblies (supercomplex SCI(1)III(2)IV(1) and megacomplex MCI(2)III(2)IV(2)).

It localises to the mitochondrion inner membrane. Its pathway is energy metabolism; oxidative phosphorylation. Component of the cytochrome c oxidase, the last enzyme in the mitochondrial electron transport chain which drives oxidative phosphorylation. The respiratory chain contains 3 multisubunit complexes succinate dehydrogenase (complex II, CII), ubiquinol-cytochrome c oxidoreductase (cytochrome b-c1 complex, complex III, CIII) and cytochrome c oxidase (complex IV, CIV), that cooperate to transfer electrons derived from NADH and succinate to molecular oxygen, creating an electrochemical gradient over the inner membrane that drives transmembrane transport and the ATP synthase. Cytochrome c oxidase is the component of the respiratory chain that catalyzes the reduction of oxygen to water. Electrons originating from reduced cytochrome c in the intermembrane space (IMS) are transferred via the dinuclear copper A center (CU(A)) of subunit 2 and heme A of subunit 1 to the active site in subunit 1, a binuclear center (BNC) formed by heme A3 and copper B (CU(B)). The BNC reduces molecular oxygen to 2 water molecules using 4 electrons from cytochrome c in the IMS and 4 protons from the mitochondrial matrix. This chain is Cytochrome c oxidase subunit 8B, mitochondrial (COX8B), found in Bos taurus (Bovine).